The chain runs to 223 residues: Ribonuclease 3 (223 aa).

The 123-residue stretch at 3-125 (LEKLQKKLGH…LIAAIYLDAG (123 aa)) folds into the RNase III domain. Glutamate 38 provides a ligand contact to Mg(2+). Residue aspartate 42 is part of the active site. Mg(2+)-binding residues include aspartate 111 and glutamate 114. Glutamate 114 is a catalytic residue. A DRBM domain is found at 152–222 (DPKTRLQEFL…AQQAIEKLKI (71 aa)).

The protein belongs to the ribonuclease III family. As to quaternary structure, homodimer. The cofactor is Mg(2+).

The protein resides in the cytoplasm. The enzyme catalyses Endonucleolytic cleavage to 5'-phosphomonoester.. In terms of biological role, digests double-stranded RNA. Involved in the processing of primary rRNA transcript to yield the immediate precursors to the large and small rRNAs (23S and 16S). Processes some mRNAs, and tRNAs when they are encoded in the rRNA operon. Processes pre-crRNA and tracrRNA of type II CRISPR loci if present in the organism. The chain is Ribonuclease 3 from Histophilus somni (strain 2336) (Haemophilus somnus).